The primary structure comprises 519 residues: MSYPQFGYPYSSAPQFLMATNSLSTCCESGGRTLADSGPAASAQAPVYCPVYESRLLATARHELNSAAALGVYGGPYGGSQGYGNYVTYGSEASAFYSLNSFDSKDGSGSAHGGLAPAAAAYYPYEPALGQYPYDRYGTMDSGTRRKNATRETTSTLKAWLQEHRKNPYPTKGEKIMLAIITKMTLTQVSTWFANARRRLKKENKMTWPPRNKCADEKRPYAEGEEEEGGEEEAREEPLKSSKNAEPVGKEEKELELSDLDDFDPLEAEPPACELKPPFHSLDGGLERVPAAPDGPVKEASGALRMSLAAGGGAALDEDLERARSCLRSAAAGPEPLPGAEGGPQVCEAKLGFVPAGASAGLEAKPRIWSLAHTATAAAAAATSLSQTEFPSCMLKRQGPAAPAAVSSAPATSPSVALPHSGALDRHQDSPVTSLRNWVDGVFHDPILRHSTLNQAWATAKGALLDPGPLGRSLGAGANVLTAPLARAFPPAVPQDAPAAGAARELLALPKAGGKPFCA.

The homeobox; TALE-type DNA-binding region spans 143–204 (GTRRKNATRE…NARRRLKKEN (62 aa)). The disordered stretch occupies residues 204–298 (NKMTWPPRNK…VPAAPDGPVK (95 aa)). Positions 213-222 (KCADEKRPYA) are enriched in basic and acidic residues. Acidic residues-rich tracts occupy residues 223–235 (EGEE…EEAR) and 257–267 (LSDLDDFDPLE).

The protein belongs to the TALE/IRO homeobox family. As to quaternary structure, interacts with the vitamin D receptor VDR but doesn't affect its transactivation activity. Predominantly expressed in cardiac ventricles.

Its subcellular location is the nucleus. In terms of biological role, likely to be an important mediator of ventricular differentiation during cardiac development. The chain is Iroquois-class homeodomain protein IRX-4 (IRX4) from Homo sapiens (Human).